We begin with the raw amino-acid sequence, 366 residues long: MIIEIVTILNFKNIEEGSLSFSPKINYLLGDNGMGKTNLLDALYYLAFTKNHTNLTDSQLINYNKDFAVLHAFYKDKDNIEEIYCGIKLKQRKIFKRNKKEYKKLSEHIGLIPTVMVSPNDTNMIQFGSNERRKFADMLISQYDKEYLRTLIYYNQALQQRNFLLRNALPSLSGEEFEIWEEQMGTTGEIIYQKRKNFTTDFLPLFKEYYYTISDKNETIDLEYVSHLDDHSLFELLYEKRERDKILGFTSTGIHKDDFNFLLNNFLIRKIGSQGQNKTYLIALKLAQFSFLVQKGLSIPILLLDDLFDKLDAKRVEKIIRLLAQKTFGQIFITDTNRKHLDNILTKMQHAYKLFYVSNGTIREIL.

30–37 (GDNGMGKT) provides a ligand contact to ATP.

Belongs to the RecF family.

The protein resides in the cytoplasm. Functionally, the RecF protein is involved in DNA metabolism; it is required for DNA replication and normal SOS inducibility. RecF binds preferentially to single-stranded, linear DNA. It also seems to bind ATP. The polypeptide is DNA replication and repair protein RecF (Azobacteroides pseudotrichonymphae genomovar. CFP2).